Consider the following 499-residue polypeptide: BTB/POZ domain-containing protein 16 (499 aa).

The BTB domain occupies 143–199 (INDPLVTREAFATALKNLYMQEVKICLDDVLGVLAAAHILQFGSLFQRCVTVMMSGL).

This chain is BTB/POZ domain-containing protein 16 (BTBD16), found in Bos taurus (Bovine).